Consider the following 136-residue polypeptide: Large ribosomal subunit protein uL16 (136 aa).

The segment covering 1–17 (MLQPKRTKFRKRHKGRN) has biased composition (basic residues). Positions 1–21 (MLQPKRTKFRKRHKGRNRGLA) are disordered.

The protein belongs to the universal ribosomal protein uL16 family. In terms of assembly, part of the 50S ribosomal subunit.

Binds 23S rRNA and is also seen to make contacts with the A and possibly P site tRNAs. This chain is Large ribosomal subunit protein uL16, found in Buchnera aphidicola subsp. Acyrthosiphon kondoi (Acyrthosiphon kondoi symbiotic bacterium).